Here is a 129-residue protein sequence, read N- to C-terminus: Small ribosomal subunit protein uS11 (129 aa).

It belongs to the universal ribosomal protein uS11 family. Part of the 30S ribosomal subunit. Interacts with proteins S7 and S18. Binds to IF-3.

In terms of biological role, located on the platform of the 30S subunit, it bridges several disparate RNA helices of the 16S rRNA. Forms part of the Shine-Dalgarno cleft in the 70S ribosome. This chain is Small ribosomal subunit protein uS11, found in Actinobacillus succinogenes (strain ATCC 55618 / DSM 22257 / CCUG 43843 / 130Z).